Reading from the N-terminus, the 502-residue chain is Glycerol kinase (502 aa).

Thr-14 contributes to the ADP binding site. Residues Thr-14, Thr-15, and Ser-16 each contribute to the ATP site. Residue Thr-14 participates in sn-glycerol 3-phosphate binding. Position 18 (Arg-18) interacts with ADP. Positions 84, 85, and 136 each coordinate sn-glycerol 3-phosphate. 3 residues coordinate glycerol: Arg-84, Glu-85, and Tyr-136. His-232 carries the post-translational modification Phosphohistidine; by HPr. A sn-glycerol 3-phosphate-binding site is contributed by Asp-246. Glycerol-binding residues include Asp-246 and Gln-247. Residues Thr-268 and Gly-311 each contribute to the ADP site. ATP is bound by residues Thr-268, Gly-311, Gln-315, and Gly-412. 2 residues coordinate ADP: Gly-412 and Asn-416.

Belongs to the FGGY kinase family. As to quaternary structure, homotetramer and homodimer (in equilibrium). The phosphoenolpyruvate-dependent sugar phosphotransferase system (PTS), including enzyme I, and histidine-containing protein (HPr) are required for the phosphorylation, which leads to the activation of the enzyme.

The enzyme catalyses glycerol + ATP = sn-glycerol 3-phosphate + ADP + H(+). It functions in the pathway polyol metabolism; glycerol degradation via glycerol kinase pathway; sn-glycerol 3-phosphate from glycerol: step 1/1. Its activity is regulated as follows. Activated by phosphorylation and inhibited by fructose 1,6-bisphosphate (FBP). Functionally, key enzyme in the regulation of glycerol uptake and metabolism. Catalyzes the phosphorylation of glycerol to yield sn-glycerol 3-phosphate. The chain is Glycerol kinase from Streptococcus sanguinis (strain SK36).